A 350-amino-acid chain; its full sequence is ATP-dependent (S)-NAD(P)H-hydrate dehydratase (350 aa).

The region spanning 35-342 (LMQSVKRIIP…PEVGRAYEEL (308 aa)) is the YjeF C-terminal domain. (6S)-NADPHX is bound by residues glycine 139 and 192 to 198 (NVAEFGR). ATP contacts are provided by residues 230-234 (KGPVD) and 249-258 (GGLKRCGGQG). (6S)-NADPHX is bound at residue aspartate 259.

It belongs to the NnrD/CARKD family. Requires Mg(2+) as cofactor.

It localises to the cytoplasm. The enzyme catalyses (6S)-NADHX + ATP = ADP + phosphate + NADH + H(+). It catalyses the reaction (6S)-NADPHX + ATP = ADP + phosphate + NADPH + H(+). In terms of biological role, catalyzes the dehydration of the S-form of NAD(P)HX at the expense of ATP, which is converted to ADP. Together with NAD(P)HX epimerase, which catalyzes the epimerization of the S- and R-forms, the enzyme allows the repair of both epimers of NAD(P)HX, a damaged form of NAD(P)H that is a result of enzymatic or heat-dependent hydration. This chain is ATP-dependent (S)-NAD(P)H-hydrate dehydratase, found in Mycosarcoma maydis (Corn smut fungus).